A 367-amino-acid polypeptide reads, in one-letter code: CCN family member 4 (367 aa).

Residues 1–22 form the signal peptide; that stretch reads MRWLLPWTLAAVAVLRVGNILA. In terms of domain architecture, IGFBP N-terminal spans 45 to 118; sequence RPEFCKWPCE…RYAIGVCAQV (74 aa). Intrachain disulfides connect C49-C73, C53-C75, C55-C76, and C62-C79. An N-linked (GlcNAc...) asparagine glycan is attached at N86. Cystine bridges form between C87–C101 and C93–C115. The VWFC domain maps to 121 to 186; that stretch reads VGCVLDGVRY…GQCCEQWVCD (66 aa). A glycan (N-linked (GlcNAc...) asparagine) is linked at N143. Residues 215-260 enclose the TSP type-1 domain; sequence NCIAYTSPWSPCSTTCGLGISTRISNVNARCWPEQESRLCNLRPCD. 5 disulfides stabilise this stretch: C273-C310, C290-C324, C301-C340, C304-C342, and C309-C346. Residues 273–347 form the CTCK domain; sequence CLAVYQPEEA…NACFCNLSCR (75 aa). A glycan (N-linked (GlcNAc...) asparagine) is linked at N284. N-linked (GlcNAc...) asparagine glycosylation is present at N343.

This sequence belongs to the CCN family. Highly expressed in kidney and lung. Lower levels in heart, brain, spleen, liver, skeletal muscle and testis. Expressed in low metastatic melanoma cells.

The protein resides in the secreted. Its function is as follows. Downstream regulator in the Wnt/Frizzled-signaling pathway. Associated with cell survival. Adheres to skin and melanoma fibroblasts. In vitro binding to skin fibroblasts occurs through the proteoglycans, decorin and biglycan. Suppresses tumor growth in vivo. The chain is CCN family member 4 (Ccn4) from Mus musculus (Mouse).